The chain runs to 254 residues: Triosephosphate isomerase (254 aa).

Substrate is bound at residue Asn-10 to Lys-12. His-99 acts as the Electrophile in catalysis. Glu-169 acts as the Proton acceptor in catalysis. Residues Gly-175, Ser-215, and Gly-236–Gly-237 contribute to the substrate site.

Belongs to the triosephosphate isomerase family. As to quaternary structure, homodimer.

Its subcellular location is the cytoplasm. The catalysed reaction is D-glyceraldehyde 3-phosphate = dihydroxyacetone phosphate. The protein operates within carbohydrate biosynthesis; gluconeogenesis. It functions in the pathway carbohydrate degradation; glycolysis; D-glyceraldehyde 3-phosphate from glycerone phosphate: step 1/1. Involved in the gluconeogenesis. Catalyzes stereospecifically the conversion of dihydroxyacetone phosphate (DHAP) to D-glyceraldehyde-3-phosphate (G3P). This Chlamydia felis (strain Fe/C-56) (Chlamydophila felis) protein is Triosephosphate isomerase.